The following is a 697-amino-acid chain: Alpha-1,4-glucan:maltose-1-phosphate maltosyltransferase (697 aa).

K284 lines the alpha-maltose 1-phosphate pocket. Residues 286–305 (RNNSVTAAPGDVGSPWAIGS) form a disordered region. Residues Q344 and D379 each contribute to the alpha-maltose 1-phosphate site. D414 (nucleophile) is an active-site residue. N415 serves as a coordination point for alpha-maltose 1-phosphate. E443 acts as the Proton donor in catalysis. 553 to 554 (KY) is an alpha-maltose 1-phosphate binding site.

This sequence belongs to the glycosyl hydrolase 13 family. GlgE subfamily. In terms of assembly, homodimer.

It carries out the reaction alpha-maltose 1-phosphate + [(1-&gt;4)-alpha-D-glucosyl](n) = [(1-&gt;4)-alpha-D-glucosyl](n+2) + phosphate. It functions in the pathway glycan biosynthesis; glycogen biosynthesis. With respect to regulation, the transfer reaction from maltose-1-P to glycogen is inhibited by micromolar amounts of inorganic phosphate or arsenate but is only slightly inhibited by millimolar concentrations of glucose-1-P, glucose-6-P, or inorganic pyrophosphate. Is also inhibited by ATP, by 1,4-dideoxy-1,4-imino-D-arabinitol (DIA), but not by isofagomine. Functionally, maltosyltransferase that uses maltose 1-phosphate (M1P) as the sugar donor to elongate linear or branched alpha-(1-&gt;4)-glucans. Is also able to catalyze the reverse reaction in vitro. Cannot use glucose 1-phosphate as substrate. Is involved in a branched alpha-glucan biosynthetic pathway from trehalose, together with TreS, Mak and GlgB. In Mycolicibacterium smegmatis (strain ATCC 700084 / mc(2)155) (Mycobacterium smegmatis), this protein is Alpha-1,4-glucan:maltose-1-phosphate maltosyltransferase (glgE).